Here is a 145-residue protein sequence, read N- to C-terminus: Glutaconyl-CoA decarboxylase subunit gamma (145 aa).

The segment at 52–82 (APAPAAAPAAAPAPAAKPAAAAPAGSVTVSA) is disordered. A compositionally biased stretch (low complexity) spans 57 to 75 (AAPAAAPAPAAKPAAAAPA). Positions 77 to 145 (SVTVSAPMPG…VATGDVMVIL (69 aa)) constitute a Biotinyl-binding domain. Residue K112 is modified to N6-biotinyllysine.

Heterooctamer consisting of two alpha, two beta, two gamma and two delta subunits. Requires biotin as cofactor.

It carries out the reaction (2E)-glutaconyl-CoA + Na(+)(in) + H(+) = (2E)-butenoyl-CoA + Na(+)(out) + CO2. The protein operates within amino-acid degradation; L-glutamate degradation via hydroxyglutarate pathway; crotonoyl-CoA from L-glutamate: step 5/5. Functionally, biotin carrier subunit of the primary sodium pump glutaconyl-CoA decarboxylase (GCD). The sequence is that of Glutaconyl-CoA decarboxylase subunit gamma (gcdC) from Acidaminococcus fermentans (strain ATCC 25085 / DSM 20731 / CCUG 9996 / CIP 106432 / VR4).